We begin with the raw amino-acid sequence, 123 residues long: Large ribosomal subunit protein uL29 (123 aa).

The tract at residues 84 to 123 (RPKKTRAMRRRLNKHEEGLKTKKQQRKERLYPPRKYAVKA) is disordered. Basic residues predominate over residues 86–96 (KKTRAMRRRLN).

This sequence belongs to the universal ribosomal protein uL29 family. Component of the large ribosomal subunit.

It is found in the cytoplasm. Functionally, component of the large ribosomal subunit. The ribosome is a large ribonucleoprotein complex responsible for the synthesis of proteins in the cell. In Ophiophagus hannah (King cobra), this protein is Large ribosomal subunit protein uL29 (RPL35).